Consider the following 39-residue polypeptide: Protein YkiC (39 aa).

Residues 13-35 (LLSAKLCNCTQAIMTHIIASFLA) form a helical membrane-spanning segment.

It is found in the cell inner membrane. This is Protein YkiC from Escherichia coli (strain K12).